The chain runs to 329 residues: DNA-directed RNA polymerase subunit alpha (329 aa).

An alpha N-terminal domain (alpha-NTD) region spans residues 1-235 (MQGSVTEFLK…EQLEAFVDLR (235 aa)). The tract at residues 249 to 329 (FDPILLRPVD…NWPPASIADE (81 aa)) is alpha C-terminal domain (alpha-CTD).

The protein belongs to the RNA polymerase alpha chain family. As to quaternary structure, homodimer. The RNAP catalytic core consists of 2 alpha, 1 beta, 1 beta' and 1 omega subunit. When a sigma factor is associated with the core the holoenzyme is formed, which can initiate transcription.

It carries out the reaction RNA(n) + a ribonucleoside 5'-triphosphate = RNA(n+1) + diphosphate. In terms of biological role, DNA-dependent RNA polymerase catalyzes the transcription of DNA into RNA using the four ribonucleoside triphosphates as substrates. This is DNA-directed RNA polymerase subunit alpha from Sodalis glossinidius (strain morsitans).